The sequence spans 228 residues: Large ribosomal subunit protein uL3 (228 aa).

This sequence belongs to the universal ribosomal protein uL3 family. As to quaternary structure, part of the 50S ribosomal subunit. Forms a cluster with proteins L14 and L19.

In terms of biological role, one of the primary rRNA binding proteins, it binds directly near the 3'-end of the 23S rRNA, where it nucleates assembly of the 50S subunit. The chain is Large ribosomal subunit protein uL3 from Leuconostoc mesenteroides subsp. mesenteroides (strain ATCC 8293 / DSM 20343 / BCRC 11652 / CCM 1803 / JCM 6124 / NCDO 523 / NBRC 100496 / NCIMB 8023 / NCTC 12954 / NRRL B-1118 / 37Y).